Here is a 438-residue protein sequence, read N- to C-terminus: Zinc finger protein 641 (438 aa).

Residues Met-1 to Thr-53 form a disordered region. A compositionally biased stretch (polar residues) spans Ser-17–Val-32. Residues Gln-40–Trp-51 show a composition bias toward basic and acidic residues. The 73-residue stretch at Val-109–Ile-181 folds into the KRAB domain. The interval Pro-171–Thr-265 is transactivation. Ser-191 carries the phosphoserine modification. C2H2-type zinc fingers lie at residues His-264–His-286, Tyr-292–His-314, and Ser-320–His-342. A disordered region spans residues Gly-345 to Pro-367. 2 consecutive C2H2-type zinc fingers follow at residues His-372–His-394 and Phe-400–His-422. The segment at His-418–Phe-438 is disordered. Residues His-422–Phe-438 show a composition bias toward polar residues. Ser-426 bears the Phosphoserine mark.

This sequence belongs to the krueppel C2H2-type zinc-finger protein family. In terms of tissue distribution, highly expressed in skeletal muscle, moderate expression in heart, liver, and pancreas, lower expression in placenta, no expression seen in brain, lung, and kidney.

The protein resides in the nucleus. Transcriptional activator. Activates transcriptional activities of SRE and AP-1. The protein is Zinc finger protein 641 (ZNF641) of Homo sapiens (Human).